Reading from the N-terminus, the 34-residue chain is NTDPEQCKVMCYAQRHSSPELLRRCLDNCEKEHD.

2 disulfide bridges follow: Cys7–Cys29 and Cys11–Cys25.

It localises to the secreted. Its function is as follows. Inhibits trypsin. The protein is Trypsin inhibitor of Veronica hederifolia (Ivy-leaved speedwell).